The sequence spans 101 residues: Urease subunit beta (101 aa).

It belongs to the urease beta subunit family. In terms of assembly, heterotrimer of UreA (gamma), UreB (beta) and UreC (alpha) subunits. Three heterotrimers associate to form the active enzyme.

It localises to the cytoplasm. It carries out the reaction urea + 2 H2O + H(+) = hydrogencarbonate + 2 NH4(+). The protein operates within nitrogen metabolism; urea degradation; CO(2) and NH(3) from urea (urease route): step 1/1. The sequence is that of Urease subunit beta from Paraburkholderia phymatum (strain DSM 17167 / CIP 108236 / LMG 21445 / STM815) (Burkholderia phymatum).